Here is a 123-residue protein sequence, read N- to C-terminus: uncharacterized protein (123 aa).

This is an uncharacterized protein from Saccharomyces cerevisiae (strain ATCC 204508 / S288c) (Baker's yeast).